A 250-amino-acid chain; its full sequence is MAILGLQGVRGGVGTTSLTAALAWALQILGENVLVIDASPDNLLRMSFNVDFVHQGGWARSLLDGQDWRDAGLRYTSQLDLLPFGQLTSQEWENPQAWQETLGEIGSAIQALKASGRYSWILLDLPYGESPLTRQLVSLCDHTLAIAQVDANCHIRLHQQALPAGAHILINDLRIGSQLQDDLYQVWLQSQRRLLPIVIHRDEAMAECMASKQPLGEYRSDSLAAEEVLTLANWCLLHDAGDKTSAGSLR.

9-16 (VRGGVGTT) contacts ATP.

The protein belongs to the BcsQ family.

It localises to the cytoplasm. Essential for cellulose biosynthesis. May play a role in subcellular localization of an active cellulose biosynthesis apparatus at the bacterial cell pole. In Salmonella typhi, this protein is Cellulose biosynthesis protein BcsQ (bcsQ).